The primary structure comprises 54 residues: Large ribosomal subunit protein bL33 (54 aa).

This sequence belongs to the bacterial ribosomal protein bL33 family.

The sequence is that of Large ribosomal subunit protein bL33 from Petrotoga mobilis (strain DSM 10674 / SJ95).